The primary structure comprises 199 residues: MKLRRIAEAKLPTPFGEFLMVGFEEIATGKDHVALVFGDISGTKPVLSRIHSECLTGDALFSLRCDCGFQLEAALSQISKEGRGVLLYHRQEGRNIGLLNKIRAYALQDQGLDTVEANLKLGFKADERDFTLCADMYNLLGIHEVRLLTNNPKKIEIMKEAGINVVERVPLIVGRNPSNAHYLDTKADKMGHMLFKKAQ.

A GTP-binding site is contributed by 49 to 53; sequence RIHSE. Zn(2+)-binding residues include Cys54, Cys65, and Cys67. Residues Gln70, 92-94, and Thr114 contribute to the GTP site; that span reads EGR. Asp126 (proton acceptor) is an active-site residue. Arg128 acts as the Nucleophile in catalysis. Residues Thr149 and Lys154 each contribute to the GTP site.

This sequence belongs to the GTP cyclohydrolase II family. In terms of assembly, homodimer. Zn(2+) serves as cofactor.

It carries out the reaction GTP + 4 H2O = 2,5-diamino-6-hydroxy-4-(5-phosphoribosylamino)-pyrimidine + formate + 2 phosphate + 3 H(+). Its pathway is cofactor biosynthesis; riboflavin biosynthesis; 5-amino-6-(D-ribitylamino)uracil from GTP: step 1/4. Its function is as follows. Catalyzes the conversion of GTP to 2,5-diamino-6-ribosylamino-4(3H)-pyrimidinone 5'-phosphate (DARP), formate and pyrophosphate. The sequence is that of GTP cyclohydrolase-2 from Proteus mirabilis (strain HI4320).